The primary structure comprises 387 residues: MTQPNNYKIGTNVIHAGQSADKNTGAVIVPISLSTTFLQPSPGVLHSEYDYSRSGNPTRKAFEECIAACENAKYALSFASGLATLTTITHLLKSGDEVISIDDVYGGTRRYFTRVAANFDLKFSFVDLSTLDDLKNAFTDKTRLVWIETPTNPLLKVADIKAVADYVHSRGATLVVDNTFMSPYFQNPLDLGADIVMHSVTKYINGHSDCVMGVLATNNDELYAKLKFLQNSIGAVPSPFDCFLALRGLKTLHVRMEAHQKNAFAICNFLEKHPKVERVIYPGLPSHPQHEICKRQMKGYGGMVVFFVKGSIDQSRSFLENIKLFALAESLGGVESLIELPSVMTHASVPAEERAKLGISDTLIRLSVGIEDINDLLADISQALDKC.

The substrate site is built by Arg-53, Tyr-105, and Arg-110. Lys-202 carries the N6-(pyridoxal phosphate)lysine modification. Glu-329 lines the substrate pocket.

It belongs to the trans-sulfuration enzymes family. In terms of assembly, homotetramer. Interacts with CALM in a calcium-dependent manner. Requires pyridoxal 5'-phosphate as cofactor.

It is found in the cytoplasm. It catalyses the reaction L,L-cystathionine + H2O = 2-oxobutanoate + L-cysteine + NH4(+). It carries out the reaction L-cysteine + H2O = hydrogen sulfide + pyruvate + NH4(+) + H(+). The enzyme catalyses L-homocysteine + H2O = 2-oxobutanoate + hydrogen sulfide + NH4(+) + H(+). The catalysed reaction is L-homoserine = 2-oxobutanoate + NH4(+). The protein operates within amino-acid biosynthesis; L-cysteine biosynthesis; L-cysteine from L-homocysteine and L-serine: step 2/2. Its function is as follows. Catalyzes the last step in the trans-sulfuration pathway from L-methionine to L-cysteine in a pyridoxal-5'-phosphate (PLP)-dependent manner, which consists on cleaving the L,L-cystathionine molecule into L-cysteine, ammonia and 2-oxobutanoate. Part of the L-cysteine derived from the trans-sulfuration pathway is utilized for biosynthesis of the ubiquitous antioxidant glutathione. Besides its role in the conversion of L-cystathionine into L-cysteine, it utilizes L-cysteine and L-homocysteine as substrates (at much lower rates than L,L-cystathionine) to produce the endogenous gaseous signaling molecule hydrogen sulfide (H2S). The polypeptide is Cystathionine gamma-lyase (cysA) (Dictyostelium discoideum (Social amoeba)).